The sequence spans 119 residues: Holo-[acyl-carrier-protein] synthase (119 aa).

Mg(2+) contacts are provided by Asp2 and Glu51.

This sequence belongs to the P-Pant transferase superfamily. AcpS family. Requires Mg(2+) as cofactor.

It localises to the cytoplasm. The enzyme catalyses apo-[ACP] + CoA = holo-[ACP] + adenosine 3',5'-bisphosphate + H(+). Functionally, transfers the 4'-phosphopantetheine moiety from coenzyme A to a Ser of acyl-carrier-protein. This chain is Holo-[acyl-carrier-protein] synthase, found in Chlorobium luteolum (strain DSM 273 / BCRC 81028 / 2530) (Pelodictyon luteolum).